We begin with the raw amino-acid sequence, 391 residues long: Glycerophosphocholine acyltransferase 1 (391 aa).

Over 1–66 (MSNNEDPINE…IAKQAEEHES (66 aa)) the chain is Cytoplasmic. Residues 67–87 (FINKVTHLLGVLGFGGFCFLL) traverse the membrane as a helical segment. Residues 88–92 (GARPQ) lie on the Lumenal side of the membrane. Residues 93 to 113 (DIPYVYCLFFFIFVPLRWIYY) traverse the membrane as a helical segment. At 114–119 (RFKKWH) the chain is on the cytoplasmic side. The chain crosses the membrane as a helical span at residues 120–140 (YFLLDFCYYANTIFLVDLLLY). The Lumenal segment spans residues 141-144 (PKDE). The chain crosses the membrane as a helical span at residues 145–165 (KLFMVCFSFAEGPLAWALIVW). Over 166–172 (RCSLVFS) the chain is Cytoplasmic. The helical transmembrane segment at 173 to 193 (SVDKIVSVLIHLLPGLVFFTI) threads the bilayer. Residues 194–226 (RWWNPATFEAMHPEGTSGRASWPYVEDKSFLFT) are Lumenal-facing. Residues 227-247 (WLFLVPLVAYFLWQLLYFLIV) form a helical membrane-spanning segment. At 248–294 (NVLRRQRLLRDPEVMTSYRELSKKAQKANNVWWRLSGLLGDQNRMLM) the chain is on the cytoplasmic side. Residues 295-315 (YILLQALFTVATTALTVPIFL) form a helical membrane-spanning segment. Residues 316-318 (SYE) are Lumenal-facing. A helical transmembrane segment spans residues 319–339 (LHAVFQILKVSAAVWNGGSFL). Over 340–391 (LDVMPRQVILKEKKKSELQPAHIQQYHSEPKQDQSPNSMEIRMKTIHSAEEQ) the chain is Cytoplasmic. Residues 354–391 (KSELQPAHIQQYHSEPKQDQSPNSMEIRMKTIHSAEEQ) are disordered. The span at 380-391 (IRMKTIHSAEEQ) shows a compositional bias: basic and acidic residues.

Belongs to the GPC1 family.

The protein localises to the membrane. The catalysed reaction is sn-glycerol 3-phosphocholine + an acyl-CoA = a monoacyl-sn-glycero-3-phosphocholine + CoA. It catalyses the reaction sn-glycero-3-phosphoethanolamine + an acyl-CoA = a monoacyl-sn-glycero-3-phosphoethanolamine + CoA. It carries out the reaction sn-glycerol 3-phosphocholine + hexadecanoyl-CoA = hexadecanoyl-sn-glycero-3-phosphocholine + CoA. The enzyme catalyses (9Z)-hexadecenoyl-CoA + sn-glycerol 3-phosphocholine = (9Z-hexadecenoyl)-sn-glycero-3-phosphocholine + CoA. The catalysed reaction is (9Z,12Z)-octadecadienoyl-CoA + sn-glycerol 3-phosphocholine = (9Z,12Z-octadecadienoyl)-sn-glycero-3-phosphocholine + CoA. It catalyses the reaction (12R)-hydroxy-(9Z)-octadecenoyl-CoA + sn-glycerol 3-phosphocholine = (12R-hydroxy-9Z-octadecenoyl)-sn-glycero-3-phosphocholine + CoA. It carries out the reaction (9Z,12Z,15Z)-octadecatrienoyl-CoA + sn-glycerol 3-phosphocholine = (9Z,12Z,15Z-octadecatrienoyl)-sn-glycero-3-phosphocholine + CoA. The enzyme catalyses sn-glycerol 3-phosphocholine + (9Z)-octadecenoyl-CoA = (9Z-octadecenoyl)-sn-glycero-3-phosphocholine + CoA. Glycerophosphocholine acyltransferase (GPCAT) that utilizes acyl-CoA to acylate glycero-3-phosphocholine (GPC), forming lysophosphatidylcholine (LPC). Shows broad acyl specificities with a preference for 16:0-CoA, polyunsaturated acyl-CoA, and the hydroxylated ricinoleoyl-CoA. Also catalyzes the acylation of glycero-3-phosphoethanolamine (GPE) with acyl-CoA. In addition to acyl-CoA, GPCAT efficiently utilizes LPC and lysophosphatidylethanolamine (LPE) as acyl donors in the acylation of GPC. Contributes to the maintenance of phosphatidylcholine (PC) homeostasis and might also have specific functions in acyl editing of PC, such as transferring acyl groups modified at the sn-2 position of PC to the sn-1. The sequence is that of Glycerophosphocholine acyltransferase 1 from Ricinus communis (Castor bean).